A 310-amino-acid chain; its full sequence is Zinc finger protein 42 homolog (310 aa).

The span at 1 to 15 (MSQQLKKRAKTRHQK) shows a compositional bias: basic residues. The segment at 1–35 (MSQQLKKRAKTRHQKGLGGRAPSGAKPRQGKSSQD) is disordered. C2H2-type zinc fingers lie at residues 188–212 (IACP…LLIH), 217–239 (HVCA…FLVH), 245–269 (FRCT…VRIH), and 275–299 (FVCP…ILTH). Glycyl lysine isopeptide (Lys-Gly) (interchain with G-Cter in ubiquitin) cross-links involve residues K231 and K233.

The protein belongs to the krueppel C2H2-type zinc-finger protein family. Polyubiquitinated by RNF12, leading to proteasomal degradation. As to expression, expressed in kidney, epidermal keratinocytes, prostate epithelial cells, bronchial and small airway lung epithelial cells (at protein level). Expressed in malignant kidney and several carcinoma cell lines (at protein level). Expressed in embryonic stem cells, kidney, epidermal keratinocytes, prostate epithelial cells, bronchial and small airway lung epithelial cells. Expressed in embryonal carcinomas, seminomas, malignant kidney and several carcinoma cell lines.

It is found in the nucleus. Its function is as follows. Involved in the reprogramming of X-chromosome inactivation during the acquisition of pluripotency. Required for efficient elongation of TSIX, a non-coding RNA antisense to XIST. Binds DXPas34 enhancer within the TSIX promoter. Involved in ES cell self-renewal. In Homo sapiens (Human), this protein is Zinc finger protein 42 homolog (ZFP42).